We begin with the raw amino-acid sequence, 287 residues long: Leucine-rich repeat-containing protein 72 (287 aa).

4 LRR repeats span residues 46–67 (DVFE…SRFK), 68–89 (KLKY…TRNY), 90–111 (CLTE…HYLP), and 112–133 (SLHI…VKEL). The region spanning 147-185 (NPLCQYNLYRLYIIYHLPGVELLDRNQVTEKERRSMITI) is the LRRCT domain.

This Homo sapiens (Human) protein is Leucine-rich repeat-containing protein 72 (LRRC72).